Reading from the N-terminus, the 1220-residue chain is Formin-F (1220 aa).

Residues 1–10 (MNRIFGRKKK) show a composition bias toward basic residues. Residues 1–62 (MNRIFGRKKK…TNSKSADKFD (62 aa)) are disordered. One can recognise a GBD/FH3 domain in the interval 6-373 (GRKKKDKDSD…QISVNKPMIG (368 aa)). The segment covering 11–20 (DKDSDEKGST) has biased composition (basic and acidic residues). Polar residues predominate over residues 41–56 (AYSSLQPDGNNSTNSK). Residues 392–428 (VALQSEFQKNIEELAKVKDQLKKANFDLNIANQELSS) adopt a coiled-coil conformation. Disordered regions lie at residues 461-659 (IDSN…KFTV), 711-732 (SQKK…GTVS), and 1049-1192 (DEAK…KKDI). 2 stretches are compositionally biased toward low complexity: residues 501 to 518 (SKPP…SSSQ) and 525 to 554 (SNLS…PQQQ). In terms of domain architecture, FH1 spans 532-655 (SDSLSNDFKS…NSNKPPANAP (124 aa)). Positions 555–564 (NIESTLTPEP) are enriched in polar residues. Pro residues predominate over residues 575–638 (TTPPPAPPAP…GKGGPPPPPG (64 aa)). The FH2 domain maps to 656–1054 (KFTVSKPTTK…AIKRDEAKAK (399 aa)). Residues 711-722 (SQKKLEASDKKS) are compositionally biased toward basic and acidic residues. The stretch at 1032 to 1062 (YKDFQRDKEAAERAIKRDEAKAKKAQQLKRM) forms a coiled coil. Over residues 1066-1083 (IASSTNNKNPLASSSTSV) the composition is skewed to polar residues. One can recognise a DAD domain in the interval 1083–1158 (VGDGGMVEDI…TPSKSGSRRE (76 aa)). The segment covering 1117–1142 (DSSSITTISEQSENSNTSSITITTPS) has biased composition (low complexity). Residues 1161–1192 (TSKSSDKDKEKEKEKEKQCESTESEDINKKDI) are compositionally biased toward basic and acidic residues.

Belongs to the formin homology family. Diaphanous subfamily. In terms of assembly, interacts (via GBD/FH3 domain) with activated Rho-GTPases.

In terms of biological role, formins play an important role in the nucleation of actin and the formation of linear actin filaments. The chain is Formin-F (forF) from Dictyostelium discoideum (Social amoeba).